The primary structure comprises 133 residues: Large ribosomal subunit protein uL14m (133 aa).

This sequence belongs to the universal ribosomal protein uL14 family. Probably part of the large ribosomal subunit.

Its subcellular location is the hydrogenosome. This is Large ribosomal subunit protein uL14m (rpl14) from Nyctotherus ovalis.